The chain runs to 299 residues: DNA-binding transcriptional activator HetR (299 aa).

Serine 152 is an active-site residue.

Belongs to the peptidase S48 family. Homodimer; disulfide-linked.

In terms of biological role, might be involved in temporal and/or spatial regulation of nitrogen fixation. Dimerization is required for DNA-binding. Has both a protease and a DNA-binding activity. This is DNA-binding transcriptional activator HetR from Leptolyngbya boryana (Plectonema boryanum).